The primary structure comprises 203 residues: Outer-membrane lipoprotein LolB (203 aa).

The N-terminal stretch at 1 to 17 (MNRLFRLLPLASLVLTA) is a signal peptide. Cysteine 18 carries N-palmitoyl cysteine lipidation. Residue cysteine 18 is the site of S-diacylglycerol cysteine attachment.

Belongs to the LolB family. As to quaternary structure, monomer.

The protein resides in the cell outer membrane. In terms of biological role, plays a critical role in the incorporation of lipoproteins in the outer membrane after they are released by the LolA protein. The protein is Outer-membrane lipoprotein LolB of Klebsiella pneumoniae (strain 342).